An 82-amino-acid polypeptide reads, in one-letter code: ATP synthase subunit c, chloroplastic (82 aa).

Helical transmembrane passes span 4–24 and 57–77; these read IISAASVIAAGLAVGLAAIGP and LAFMESLTIYGLVVALSLLFA.

Belongs to the ATPase C chain family. As to quaternary structure, F-type ATPases have 2 components, F(1) - the catalytic core - and F(0) - the membrane proton channel. F(1) has five subunits: alpha(3), beta(3), gamma(1), delta(1), epsilon(1). F(0) has four main subunits: a(1), b(1), b'(1) and c(10-14). The alpha and beta chains form an alternating ring which encloses part of the gamma chain. F(1) is attached to F(0) by a central stalk formed by the gamma and epsilon chains, while a peripheral stalk is formed by the delta, b and b' chains.

It is found in the plastid. The protein resides in the chloroplast thylakoid membrane. In terms of biological role, f(1)F(0) ATP synthase produces ATP from ADP in the presence of a proton or sodium gradient. F-type ATPases consist of two structural domains, F(1) containing the extramembraneous catalytic core and F(0) containing the membrane proton channel, linked together by a central stalk and a peripheral stalk. During catalysis, ATP synthesis in the catalytic domain of F(1) is coupled via a rotary mechanism of the central stalk subunits to proton translocation. Key component of the F(0) channel; it plays a direct role in translocation across the membrane. A homomeric c-ring of between 10-14 subunits forms the central stalk rotor element with the F(1) delta and epsilon subunits. The protein is ATP synthase subunit c, chloroplastic of Antithamnion sp. (Red alga).